Reading from the N-terminus, the 205-residue chain is Inosine triphosphate pyrophosphatase (205 aa).

20-25 (TGNAKK) provides a ligand contact to ITP. Glu48 contacts Mg(2+). ITP is bound by residues Lys60, 76-77 (DT), Lys93, 152-155 (FGWD), Lys175, and 180-181 (HR).

The protein belongs to the HAM1 NTPase family. Homodimer. Mg(2+) serves as cofactor. The cofactor is Mn(2+).

Its subcellular location is the cytoplasm. The enzyme catalyses ITP + H2O = IMP + diphosphate + H(+). It carries out the reaction dITP + H2O = dIMP + diphosphate + H(+). The catalysed reaction is XTP + H2O = XMP + diphosphate + H(+). In terms of biological role, pyrophosphatase that hydrolyzes non-canonical purine nucleotides such as inosine triphosphate (ITP), deoxyinosine triphosphate (dITP) or xanthosine 5'-triphosphate (XTP) to their respective monophosphate derivatives. The enzyme does not distinguish between the deoxy- and ribose forms. Probably excludes non-canonical purines from RNA and DNA precursor pools, thus preventing their incorporation into RNA and DNA and avoiding chromosomal lesions. The chain is Inosine triphosphate pyrophosphatase from Oryza sativa subsp. japonica (Rice).